Here is a 224-residue protein sequence, read N- to C-terminus: Glutathione S-transferase U1 (224 aa).

The 80-residue stretch at glutamate 6 to proline 85 folds into the GST N-terminal domain. Glutathione contacts are provided by residues serine 16–proline 17, asparagine 42–lysine 43, lysine 56–valine 57, and glutamate 69–serine 70. The GST C-terminal domain occupies aspartate 90–isoleucine 217. Threonine 151 bears the Phosphothreonine mark.

Belongs to the GST superfamily. Tau family.

Its subcellular location is the cytoplasm. It localises to the cytosol. The enzyme catalyses RX + glutathione = an S-substituted glutathione + a halide anion + H(+). May be involved in the conjugation of reduced glutathione to a wide number of exogenous and endogenous hydrophobic electrophiles and have a detoxification role against certain herbicides. This Arabidopsis thaliana (Mouse-ear cress) protein is Glutathione S-transferase U1 (GSTU1).